Consider the following 1373-residue polypeptide: TAL effector protein PthXo1 (1373 aa).

2 disordered regions span residues 1–68 and 127–152; these read MDPI…SAGS and AARPPRAKPAPRRRAAQPSDASPAAQ. The span at 131-141 shows a compositional bias: basic residues; it reads PRAKPAPRRRA. The segment covering 142-152 has biased composition (low complexity); sequence AQPSDASPAAQ. Residues 221–239 form a Cryptic repeat -1 repeat; the sequence is THEDIVGVGKQWSGARALE. Residues 256 to 273 form a Cryptic repeat 0 repeat; that stretch reads DTGQLVKIAKRGGVTAVE. Core repeat repeat units lie at residues 289–322, 323–356, 357–390, 391–424, 425–458, 459–492, 493–525, 526–559, 560–593, 594–627, 628–661, 662–695, 696–729, 730–763, 764–797, 798–831, 832–865, 866–899, 900–933, 934–967, 968–1001, 1002–1034, and 1035–1068; these read LTPAQVVAIASNNGGKQALETVQRLLPVLCQAHG, LTPAQVVAIASHDGGKQALETMQRLLPVLCQAHG, LPPDQVVAIASNIGGKQALETVQRLLPVLCQAHG, LTPDQVVAIASHGGGKQALETVQRLLPVLCQAHG, LTPDQVVAIASHDGGKQALETVQRLLPVLCQAHG, LTPDQVVAIASNGGGKQALETVQRLLPVLCQAHG, LTPDQVVAIASNGGKQALETVQRLLPVLCQAHG, LTPDQVVAIASHDGGKQALETVQRLLPVLCQTHG, LTPAQVVAIASHDGGKQALETVQQLLPVLCQAHG, LTPDQVVAIASNIGGKQALATVQRLLPVLCQAHG, LTQVQVVAIASNIGGKQALETVQRLLPVLCQAHG, LTPAQVVAIASHDGGKQALETVQRLLPVLCQAHG, LTQEQVVAIASNNGGKQALETVQRLLPVLCQAHG, LTPAQVVAIASNIGGKQALETVQRLLPVLCQDHG, LTLAQVVAIASNIGGKQALETVQRLLPVLCQAHG, LTQDQVVAIASNIGGKQALETVQRLLPVLCQDHG, LTPDQVVAIASNIGGKQALETVQRLLPVLCQDHG, LTLDQVVAIASNGGKQALETVQRLLPVLCQDHG, and LTPDQVVAIASNSGGKQALETVQRLLPVLCQDHG. HEAT repeat units lie at residues 714–760, 782–828, 850–893, and 918–961; these read LETV…VLCQ and LETV…LLPV. The stretch at 1053–1091 is one HEAT 5 repeat; the sequence is LETVQRLLPVLCQDHGLTPNQVVAIASNGGKQALESIVA. Residues 1069-1087 form a Core repeat 23.5 repeat; that stretch reads LTPNQVVAIASNGGKQALE. The segment at 1136-1364 is acidic activation domain; it reads RVNRRIGERT…ELAWLMELLP (229 aa). Positions 1222-1225 match the Nuclear localization signal NLS1 motif; the sequence is KRAK. Residues 1250 to 1286 are disordered; that stretch reads LDAPSPMHEGDQTGASSRKRSRSDRAVTGPSAQHSFE. Positions 1268–1271 match the Nuclear localization signal NLS2 motif; it reads KRSR. A Nuclear localization signal NLS3 motif is present at residues 1305-1308; it reads KRPR.

The protein belongs to the transcription activator-like effector (TALE) family.

The protein resides in the secreted. It is found in the host nucleus. Functionally, avirulence protein. Acts as a transcription factor in rice, inducing expression of a number of host genes including SWEET11 (Os8N3, XA13, AC Q6YZF3) in susceptible plants with the Xa13 allele. Plants with the xa13 allele, which has an altered promoter, are resistant to bacterial blight caused by this bacterial strain and do not induce SWEET11. The xa13 allele elicits an atypical hypersensitive response (HR). PthXo1 binds SWEET11 promoter DNA in a sequence-specific manner. The sequence is that of TAL effector protein PthXo1 (pthXo1) from Xanthomonas oryzae pv. oryzae (strain PXO99A).